A 271-amino-acid chain; its full sequence is RELT-like protein 1 (271 aa).

An N-terminal signal peptide occupies residues 1 to 23 (MAPRALPGSAVLAAAVFVGGAVS). Topologically, residues 24–57 (SPLVAPDNGSSRTLHSRTETTPSPSNDTGNGHPE) are extracellular. The disordered stretch occupies residues 28 to 53 (APDNGSSRTLHSRTETTPSPSNDTGN). N31 and N49 each carry an N-linked (GlcNAc...) asparagine glycan. Residues 31–52 (NGSSRTLHSRTETTPSPSNDTG) show a composition bias toward polar residues. Residues 58–78 (YIAYALVPVFFIMGLFGVLIC) traverse the membrane as a helical segment. At 79–271 (HLLKKKGYRC…PVKRERSGTE (193 aa)) the chain is on the cytoplasmic side. Residues 89-113 (TTEAEQDIEEEKVEKIELNDSVNEN) adopt a coiled-coil conformation. S109 and S114 each carry phosphoserine. Disordered regions lie at residues 145 to 173 (DPES…TPGK) and 233 to 271 (VEHK…SGTE). Over residues 155–165 (PGSPPVSPGPL) the composition is skewed to pro residues. Residues 233–244 (VEHKSNQKERRS) show a composition bias toward basic and acidic residues. Residues S244 and S247 each carry the phosphoserine modification.

It belongs to the RELT family. Interacts with RELT, RELL2 and OXSR1. Interacts with PLSCR1. In terms of processing, phosphorylated in vitro by OXSR1. In terms of tissue distribution, widely expressed. Expressed at highest levels in the placenta, skeletal muscle, spleen and testis.

Its subcellular location is the cell membrane. Functionally, induces activation of MAPK14/p38 cascade, when overexpressed. Induces apoptosis, when overexpressed. The chain is RELT-like protein 1 (RELL1) from Homo sapiens (Human).